Here is a 156-residue protein sequence, read N- to C-terminus: Ribosomal RNA large subunit methyltransferase H (156 aa).

Residues Leu-73, Gly-104, and 123–128 each bind S-adenosyl-L-methionine; that span reads LSRLTL.

Belongs to the RNA methyltransferase RlmH family. As to quaternary structure, homodimer.

The protein localises to the cytoplasm. It catalyses the reaction pseudouridine(1915) in 23S rRNA + S-adenosyl-L-methionine = N(3)-methylpseudouridine(1915) in 23S rRNA + S-adenosyl-L-homocysteine + H(+). Its function is as follows. Specifically methylates the pseudouridine at position 1915 (m3Psi1915) in 23S rRNA. This chain is Ribosomal RNA large subunit methyltransferase H, found in Thiobacillus denitrificans (strain ATCC 25259 / T1).